The primary structure comprises 129 residues: Replication initiation control protein YabA (129 aa).

Zn(2+)-binding residues include H103, C105, C119, and C122.

The protein belongs to the YabA family. Homotetramer. Interacts with both DnaA and DnaN, acting as a bridge between these two proteins. Zn(2+) serves as cofactor.

The protein localises to the cytoplasm. It is found in the nucleoid. Involved in control of chromosome replication initiation. Inhibits the cooperative binding of DnaA to the oriC region, thus negatively regulating initiation of chromosome replication. Inhibits the ability of DnaA-ATP to form a helix on DNA; does not disassemble preformed DnaA-DNA helices. Decreases the residence time of DnaA on the chromosome at its binding sites (oriC, replication forks and promoter-binding sites). Tethers DnaA to the replication machinery via the DNA polymerase beta sliding clamp subunit (dnaN). Associates with oriC and other DnaA targets on the chromosome in a DnaA-dependent manner. This chain is Replication initiation control protein YabA, found in Listeria welshimeri serovar 6b (strain ATCC 35897 / DSM 20650 / CCUG 15529 / CIP 8149 / NCTC 11857 / SLCC 5334 / V8).